A 462-amino-acid chain; its full sequence is Probable acid phosphatase SPBC4.06 (462 aa).

H35 acts as the Nucleophile in catalysis. The active-site Proton donor is D330.

Belongs to the histidine acid phosphatase family.

It is found in the mitochondrion. The catalysed reaction is a phosphate monoester + H2O = an alcohol + phosphate. The protein is Probable acid phosphatase SPBC4.06 of Schizosaccharomyces pombe (strain 972 / ATCC 24843) (Fission yeast).